A 138-amino-acid chain; its full sequence is Transcription factor Atoh7-b (138 aa).

The bHLH domain occupies 33 to 85; that stretch reads KRRLAANARERRRMQGLNTAFDSLRKVVPQWGEDKKLSKYETLQMALSYIMAL.

The protein localises to the nucleus. It localises to the perikaryon. It is found in the cell projection. The protein resides in the axon. In terms of biological role, transcription factor that binds to DNA at the consensus sequence 5'-CAG[GC]TG-3'. Positively regulates the determination of retinal ganglion cell fate and formation of the optic nerve and retino-hypothalamic tract. Required for retinal circadian rhythm photoentrainment. Plays a role in brainstem auditory signaling and binaural processing. Regulates the differentiation of olfactory receptor neurons. During retinal neurogenesis, activates the transcription of several genes such as brn3d, coe3, cbfa2t2, glis2, elrC and xgadd45-gamma. In Xenopus laevis (African clawed frog), this protein is Transcription factor Atoh7-b.